A 1026-amino-acid chain; its full sequence is RecBCD enzyme subunit RecB (1026 aa).

In terms of domain architecture, UvrD-like helicase ATP-binding spans 1 to 438 (MSSFDIFSPT…LILDTNYRST (438 aa)). A DNA-binding and helicase activity, interacts with RecC region spans residues 1 to 766 (MSSFDIFSPT…LANYANVTKH (766 aa)). Residue 21–28 (ASAGTGKT) coordinates ATP. The nuclease activity, interacts with RecD and RecA stretch occupies residues 815 to 1026 (SRTIHSFSST…KGNGFLQPGR (212 aa)). His854, Asp940, and Asp953 together coordinate Mg(2+). The active-site For nuclease activity is the Asp953.

It belongs to the helicase family. UvrD subfamily. As to quaternary structure, heterotrimer of RecB, RecC and RecD. All subunits contribute to DNA-binding. Interacts with RecA. Mg(2+) serves as cofactor.

The enzyme catalyses Exonucleolytic cleavage (in the presence of ATP) in either 5'- to 3'- or 3'- to 5'-direction to yield 5'-phosphooligonucleotides.. The catalysed reaction is Couples ATP hydrolysis with the unwinding of duplex DNA by translocating in the 3'-5' direction.. It carries out the reaction ATP + H2O = ADP + phosphate + H(+). Its function is as follows. A helicase/nuclease that prepares dsDNA breaks (DSB) for recombinational DNA repair. Binds to DSBs and unwinds DNA via a highly rapid and processive ATP-dependent bidirectional helicase activity. Unwinds dsDNA until it encounters a Chi (crossover hotspot instigator) sequence from the 3' direction. Cuts ssDNA a few nucleotides 3' to the Chi site. The properties and activities of the enzyme are changed at Chi. The Chi-altered holoenzyme produces a long 3'-ssDNA overhang and facilitates RecA-binding to the ssDNA for homologous DNA recombination and repair. Holoenzyme degrades any linearized DNA that is unable to undergo homologous recombination. In the holoenzyme this subunit contributes ATPase, 3'-5' helicase, exonuclease activity and loads RecA onto ssDNA. The chain is RecBCD enzyme subunit RecB from Chlamydia trachomatis serovar D (strain ATCC VR-885 / DSM 19411 / UW-3/Cx).